Consider the following 136-residue polypeptide: Large ribosomal subunit protein bL19 (136 aa).

The segment at M1–T23 is disordered. The segment covering E12–T23 has biased composition (acidic residues).

It belongs to the bacterial ribosomal protein bL19 family.

Functionally, this protein is located at the 30S-50S ribosomal subunit interface and may play a role in the structure and function of the aminoacyl-tRNA binding site. This is Large ribosomal subunit protein bL19 from Dehalococcoides mccartyi (strain ATCC BAA-2266 / KCTC 15142 / 195) (Dehalococcoides ethenogenes (strain 195)).